We begin with the raw amino-acid sequence, 311 residues long: Eukaryotic translation initiation factor 3 subunit E (311 aa).

Residues 100–280 form the PCI domain; sequence VYYNYPKGRD…MGVKSVSIHE (181 aa).

This sequence belongs to the eIF-3 subunit E family. In terms of assembly, component of the eukaryotic translation initiation factor 3 (eIF-3) complex.

The protein resides in the cytoplasm. Its function is as follows. Component of the eukaryotic translation initiation factor 3 (eIF-3) complex, which is involved in protein synthesis of a specialized repertoire of mRNAs and, together with other initiation factors, stimulates binding of mRNA and methionyl-tRNAi to the 40S ribosome. The eIF-3 complex specifically targets and initiates translation of a subset of mRNAs involved in cell proliferation. This Caenorhabditis briggsae protein is Eukaryotic translation initiation factor 3 subunit E.